A 471-amino-acid chain; its full sequence is Glutamate--tRNA ligase (471 aa).

A 'HIGH' region motif is present at residues 9–19 (PSPTGYLHVGG). Zn(2+) contacts are provided by Cys98, Cys100, Cys125, and His127. The short motif at 237–241 (KLSKR) is the 'KMSKS' region element. Lys240 provides a ligand contact to ATP.

It belongs to the class-I aminoacyl-tRNA synthetase family. Glutamate--tRNA ligase type 1 subfamily. In terms of assembly, monomer. Zn(2+) is required as a cofactor.

The protein localises to the cytoplasm. The catalysed reaction is tRNA(Glu) + L-glutamate + ATP = L-glutamyl-tRNA(Glu) + AMP + diphosphate. In terms of biological role, catalyzes the attachment of glutamate to tRNA(Glu) in a two-step reaction: glutamate is first activated by ATP to form Glu-AMP and then transferred to the acceptor end of tRNA(Glu). The polypeptide is Glutamate--tRNA ligase (Salmonella schwarzengrund (strain CVM19633)).